A 290-amino-acid polypeptide reads, in one-letter code: Phycobilisome 32.3 kDa linker polypeptide, phycocyanin-associated, rod (290 aa).

One can recognise a PBS-linker domain in the interval 1–179; it reads MPVTVAASRL…LQRGYANSDR (179 aa). The CpcD-like domain maps to 236 to 288; sequence DQVVRVEVAALSTPRYPRIRRSSRVFFVPVSRLSQKLQEIQRMGGRVASISPA.

The protein belongs to the phycobilisome linker protein family.

It localises to the cellular thylakoid membrane. Rod linker protein, associated with phycocyanin. Linker polypeptides determine the state of aggregation and the location of the disk-shaped phycobiliprotein units within the phycobilisome and modulate their spectroscopic properties in order to mediate a directed and optimal energy transfer. This Picosynechococcus sp. (strain ATCC 27264 / PCC 7002 / PR-6) (Agmenellum quadruplicatum) protein is Phycobilisome 32.3 kDa linker polypeptide, phycocyanin-associated, rod (cpcC).